We begin with the raw amino-acid sequence, 311 residues long: 4-diphosphocytidyl-2-C-methyl-D-erythritol kinase (311 aa).

Lysine 10 is an active-site residue. 105–115 (PVAGGMAGGSA) contacts ATP. Aspartate 146 is an active-site residue.

Belongs to the GHMP kinase family. IspE subfamily.

The enzyme catalyses 4-CDP-2-C-methyl-D-erythritol + ATP = 4-CDP-2-C-methyl-D-erythritol 2-phosphate + ADP + H(+). Its pathway is isoprenoid biosynthesis; isopentenyl diphosphate biosynthesis via DXP pathway; isopentenyl diphosphate from 1-deoxy-D-xylulose 5-phosphate: step 3/6. Its function is as follows. Catalyzes the phosphorylation of the position 2 hydroxy group of 4-diphosphocytidyl-2C-methyl-D-erythritol. This is 4-diphosphocytidyl-2-C-methyl-D-erythritol kinase from Corynebacterium glutamicum (strain ATCC 13032 / DSM 20300 / JCM 1318 / BCRC 11384 / CCUG 27702 / LMG 3730 / NBRC 12168 / NCIMB 10025 / NRRL B-2784 / 534).